Reading from the N-terminus, the 259-residue chain is Protein unc-50 homolog (259 aa).

Met1 carries the post-translational modification N-acetylmethionine. Over 1 to 82 the chain is Cytoplasmic; that stretch reads MLPSTSVNSL…TKDQWARDDP (82 aa). Residue Ser6 is modified to Phosphoserine. A helical membrane pass occupies residues 83-103; sequence AFLVLLSIWLCVSTIGFGFVL. At 104–115 the chain is on the lumenal side; that stretch reads DMGFFETIKLLL. The helical transmembrane segment at 116-136 threads the bilayer; the sequence is WVVLIDCVGVGLLIATLMWFI. The Cytoplasmic segment spans residues 137–163; it reads SNKYLVKRQSRDYDVEWGYAFDVHLNA. Residues 164–184 traverse the membrane as a helical segment; that stretch reads FYPLLVILHFIQLFFINHVIL. The Lumenal segment spans residues 185–187; sequence TDT. Residues 188–208 form a helical membrane-spanning segment; sequence FIGYLVGNTLWLVAVGYYIYV. Residues 209–222 lie on the Cytoplasmic side of the membrane; sequence TFLGYSALPFLKNT. Residues 223 to 243 form a helical membrane-spanning segment; the sequence is VILLYPFAPLILLYGLSLALG. The Lumenal portion of the chain corresponds to 244–259; it reads WNFTHTLCSFYKYRVK.

It belongs to the unc-50 family. Present in periodontal ligament fibroblasts (at protein level).

Its subcellular location is the nucleus inner membrane. The protein resides in the golgi apparatus membrane. In terms of biological role, involved in the cell surface expression of neuronal nicotinic receptors. Binds RNA. This Homo sapiens (Human) protein is Protein unc-50 homolog (UNC50).